The following is a 526-amino-acid chain: Probable feruloyl esterase B-2 (526 aa).

The first 18 residues, 1-18, serve as a signal peptide directing secretion; it reads MTKLSLLPLLTLASAVLA. 2 cysteine pairs are disulfide-bonded: Cys-27–Cys-74 and Cys-62–Cys-113. The N-linked (GlcNAc...) asparagine glycan is linked to Asn-52. Residue Asn-137 is glycosylated (N-linked (GlcNAc...) asparagine). Disulfide bonds link Cys-186-Cys-441, Cys-255-Cys-272, Cys-281-Cys-291, and Cys-503-Cys-525. Catalysis depends on Ser-187, which acts as the Acyl-ester intermediate. Asn-233 is a glycosylation site (N-linked (GlcNAc...) asparagine). Residues Asp-256, Asp-259, Ala-261, Asp-263, and Ile-265 each contribute to the Ca(2+) site. Residues Asp-400 and His-440 each act as charge relay system in the active site. The N-linked (GlcNAc...) asparagine glycan is linked to Asn-516.

It belongs to the tannase family.

It localises to the secreted. The enzyme catalyses feruloyl-polysaccharide + H2O = ferulate + polysaccharide.. Involved in degradation of plant cell walls. Hydrolyzes the feruloyl-arabinose ester bond in arabinoxylans as well as the feruloyl-galactose and feruloyl-arabinose ester bonds in pectin. This is Probable feruloyl esterase B-2 (faeB-2) from Aspergillus fumigatus (strain ATCC MYA-4609 / CBS 101355 / FGSC A1100 / Af293) (Neosartorya fumigata).